Consider the following 596-residue polypeptide: Beta-glucuronidase (596 aa).

Residues Asp-168 and Asn-412 each coordinate D-glucuronate. The active-site Proton donor is Glu-413. Asn-464, Tyr-470, Glu-502, Trp-547, and Lys-566 together coordinate D-glucuronate. Glu-502 acts as the Nucleophile in catalysis. Residues 564-566 (NKK) carry the N-K motif motif.

This sequence belongs to the glycosyl hydrolase 2 family.

The protein resides in the cytoplasm. It carries out the reaction a beta-D-glucuronoside + H2O = D-glucuronate + an alcohol. Functionally, displays beta-glucuronidase activity with the artificial substrate p-nitrophenyl-beta-D-glucuronide (PNPG). Is probably involved in the metabolism of oligosaccharides containing the 3-O-beta-D-glucopyranosyl-beta-D-glucuronide structure released from bacterial and plant acidic carbohydrates. This chain is Beta-glucuronidase, found in Paenibacillus borealis.